A 226-amino-acid polypeptide reads, in one-letter code: Protein AhpA (226 aa).

The next 2 membrane-spanning stretches (helical) occupy residues 12–32 (SMIS…LFGV) and 169–189 (GELI…HYFL).

This sequence belongs to the Smp family.

It is found in the cell inner membrane. Functionally, when anaerobically expressed in wild-type E.coli K12 confers a hemolytic phenotype, but not in an sheA mutant. Suggests it affects the expression of the latent E.coli K12 hemolysin sheA under anaerobic conditions. The chain is Protein AhpA (ahpA) from Pasteurella multocida (strain Pm70).